We begin with the raw amino-acid sequence, 234 residues long: Sugar fermentation stimulation protein homolog (234 aa).

It belongs to the SfsA family.

This Citrobacter koseri (strain ATCC BAA-895 / CDC 4225-83 / SGSC4696) protein is Sugar fermentation stimulation protein homolog.